The chain runs to 430 residues: Probable sugar isomerase R00627 (430 aa).

Mn(2+) is bound by residues His-257, Asp-289, and Asp-291.

It belongs to the rhamnose isomerase family. Requires Mn(2+) as cofactor.

This is Probable sugar isomerase R00627 from Rhizobium meliloti (strain 1021) (Ensifer meliloti).